Reading from the N-terminus, the 147-residue chain is Large ribosomal subunit protein uL16 (147 aa).

Belongs to the universal ribosomal protein uL16 family. Part of the 50S ribosomal subunit.

Binds 23S rRNA and is also seen to make contacts with the A and possibly P site tRNAs. This is Large ribosomal subunit protein uL16 from Lactobacillus delbrueckii subsp. bulgaricus (strain ATCC 11842 / DSM 20081 / BCRC 10696 / JCM 1002 / NBRC 13953 / NCIMB 11778 / NCTC 12712 / WDCM 00102 / Lb 14).